The sequence spans 678 residues: THO complex subunit 5 homolog B (678 aa).

Disordered regions lie at residues 1–37 and 294–329; these read MSSD…EEAE and ALFK…VQLD. Positions 7-10 match the Nuclear localization signal motif; it reads KKRK. A compositionally biased stretch (basic and acidic residues) spans 14 to 37; it reads NRSEDGKRGRHDEQEGRYYSEEAE. The span at 301–314 shows a compositional bias: acidic residues; it reads DSQDDESDSDAEEE.

Belongs to the THOC5 family. In terms of assembly, component of the THO subcomplex, which is composed of thoc1, thoc2, thoc3, thoc5, thoc6 and thoc7. Component of the transcription/export (TREX) complex at least composed of alyref/thoc4, ddx39b, sarnp/cip29, chtop and the THO subcomplex. Interacts with thoc7.

Its subcellular location is the nucleus. It localises to the nucleus speckle. The protein resides in the cytoplasm. Its function is as follows. Component of the THO subcomplex of the TREX complex which is thought to couple mRNA transcription, processing and nuclear export, and which specifically associates with spliced mRNA and not with unspliced pre-mRNA. Plays a key structural role in the oligomerization of the THO-ddx39b complex. TREX is recruited to spliced mRNAs by a transcription-independent mechanism, binds to mRNA upstream of the exon-junction complex (EJC) and is recruited in a splicing- and cap-dependent manner to a region near the 5' end of the mRNA where it functions in mRNA export to the cytoplasm via the TAP/NXF1 pathway. May be involved in cell differentiation. This is THO complex subunit 5 homolog B (thoc5-b) from Xenopus laevis (African clawed frog).